The following is a 193-amino-acid chain: Imidazoleglycerol-phosphate dehydratase (193 aa).

Belongs to the imidazoleglycerol-phosphate dehydratase family.

The protein resides in the cytoplasm. It carries out the reaction D-erythro-1-(imidazol-4-yl)glycerol 3-phosphate = 3-(imidazol-4-yl)-2-oxopropyl phosphate + H2O. The protein operates within amino-acid biosynthesis; L-histidine biosynthesis; L-histidine from 5-phospho-alpha-D-ribose 1-diphosphate: step 6/9. The polypeptide is Imidazoleglycerol-phosphate dehydratase (Saccharolobus islandicus (strain M.16.27) (Sulfolobus islandicus)).